The sequence spans 229 residues: Putative N-acetylmannosamine-6-phosphate 2-epimerase (229 aa).

Belongs to the NanE family.

It catalyses the reaction an N-acyl-D-glucosamine 6-phosphate = an N-acyl-D-mannosamine 6-phosphate. The protein operates within amino-sugar metabolism; N-acetylneuraminate degradation; D-fructose 6-phosphate from N-acetylneuraminate: step 3/5. Its function is as follows. Converts N-acetylmannosamine-6-phosphate (ManNAc-6-P) to N-acetylglucosamine-6-phosphate (GlcNAc-6-P). This chain is Putative N-acetylmannosamine-6-phosphate 2-epimerase, found in Salmonella arizonae (strain ATCC BAA-731 / CDC346-86 / RSK2980).